The primary structure comprises 180 residues: Large ribosomal subunit protein uL5 (180 aa).

This sequence belongs to the universal ribosomal protein uL5 family. As to quaternary structure, part of the 50S ribosomal subunit; part of the 5S rRNA/L5/L18/L25 subcomplex. Contacts the 5S rRNA and the P site tRNA. Forms a bridge to the 30S subunit in the 70S ribosome.

In terms of biological role, this is one of the proteins that bind and probably mediate the attachment of the 5S RNA into the large ribosomal subunit, where it forms part of the central protuberance. In the 70S ribosome it contacts protein S13 of the 30S subunit (bridge B1b), connecting the 2 subunits; this bridge is implicated in subunit movement. Contacts the P site tRNA; the 5S rRNA and some of its associated proteins might help stabilize positioning of ribosome-bound tRNAs. This chain is Large ribosomal subunit protein uL5, found in Limosilactobacillus reuteri (strain DSM 20016) (Lactobacillus reuteri).